The chain runs to 206 residues: MLDRVVVLLSVLCLGVSSQPIPNNQHLFSMAVSRIHHLHLRAQRLFANFESSLQSDDQRQLNKIFLQDFCNSDYIISPIDKHETQRSSVLKLLLISKQLVESWEISSHFLPGGLAERSQISSRLAELREGIQMLITTNQEGAEVFSDSSTLPLAPPFGNFFQTQGGDELQRRSYELLACFKKDMHKVETYLTVAKCRLSTEANCTL.

Residues 1–18 (MLDRVVVLLSVLCLGVSS) form the signal peptide. Gln19 carries the pyrrolidone carboxylic acid modification. His37 serves as a coordination point for Zn(2+). An intrachain disulfide couples Cys70 to Cys179. Glu188 contacts Zn(2+). Cysteines 196 and 204 form a disulfide.

This sequence belongs to the somatotropin/prolactin family.

It is found in the secreted. In terms of biological role, growth hormone plays an important role in growth control and is involved in the regulation of several anabolic processes. Implicated as an osmoregulatory substance important for seawater adaptation. The chain is Somatotropin (gh) from Pseudocaranx dentex (White trevally).